Reading from the N-terminus, the 431-residue chain is Glutamyl-tRNA reductase (431 aa).

Substrate contacts are provided by residues 49-52 (TCDR), Ser109, 114-116 (EPH), and Gln120. Catalysis depends on Cys50, which acts as the Nucleophile. An NADP(+)-binding site is contributed by 189 to 194 (GTQEMG).

It belongs to the glutamyl-tRNA reductase family. In terms of assembly, homodimer.

The catalysed reaction is (S)-4-amino-5-oxopentanoate + tRNA(Glu) + NADP(+) = L-glutamyl-tRNA(Glu) + NADPH + H(+). It participates in porphyrin-containing compound metabolism; protoporphyrin-IX biosynthesis; 5-aminolevulinate from L-glutamyl-tRNA(Glu): step 1/2. The protein operates within porphyrin-containing compound metabolism; chlorophyll biosynthesis. In terms of biological role, catalyzes the NADPH-dependent reduction of glutamyl-tRNA(Glu) to glutamate 1-semialdehyde (GSA). In Rhodospirillum rubrum (strain ATCC 11170 / ATH 1.1.1 / DSM 467 / LMG 4362 / NCIMB 8255 / S1), this protein is Glutamyl-tRNA reductase.